A 248-amino-acid chain; its full sequence is 2-acetamido-2-deoxy-D-galactose-binding seed lectin 2 (248 aa).

Asn-119 carries an N-linked (GlcNAc...) asparagine; partial glycan. Mn(2+) is bound by residues Glu-128 and Asp-130. Ca(2+) contacts are provided by Asp-130, Tyr-132, Asn-134, and Asp-138. Asp-138 and His-144 together coordinate Mn(2+).

It belongs to the leguminous lectin family.

The protein is 2-acetamido-2-deoxy-D-galactose-binding seed lectin 2 of Cytisus scoparius (Scotch broom).